Consider the following 497-residue polypeptide: Zinc finger protein 3 (497 aa).

Residues 1–20 (MGTEKKEGLPKEETSEDSKP) are compositionally biased toward basic and acidic residues. The tract at residues 1 to 53 (MGTEKKEGLPKEETSEDSKPHGQTVEKLAQEVCHGHEFGEASEEDMSEGHLRE) is disordered. Residues K6 and K11 each participate in a glycyl lysine isopeptide (Lys-Gly) (interchain with G-Cter in SUMO2) cross-link. 13 C2H2-type zinc fingers span residues 136–158 (HTCK…MRVH), 164–186 (FECK…QRIH), 192–214 (FACT…HRIH), 220–242 (YKCE…QRIH), 248–270 (YECN…QRIH), 276–298 (HECS…QKIH), 304–326 (YLCN…QRIH), 332–354 (YECS…IRIH), 360–382 (YVCK…ERIH), 388–410 (YECF…QRIH), 416–438 (HQCN…QKIH), 444–466 (YECS…QRIH), and 472–494 (YECQ…QSVH).

Belongs to the krueppel C2H2-type zinc-finger protein family.

It localises to the nucleus. In terms of biological role, may be involved in transcriptional regulation. This Mus musculus (Mouse) protein is Zinc finger protein 3 (Zfp3).